The following is a 127-amino-acid chain: Aspartate 1-decarboxylase (127 aa).

Catalysis depends on S25, which acts as the Schiff-base intermediate with substrate; via pyruvic acid. S25 is subject to Pyruvic acid (Ser). T57 serves as a coordination point for substrate. The Proton donor role is filled by Y58. 73 to 75 (GAA) lines the substrate pocket.

It belongs to the PanD family. As to quaternary structure, heterooctamer of four alpha and four beta subunits. It depends on pyruvate as a cofactor. Is synthesized initially as an inactive proenzyme, which is activated by self-cleavage at a specific serine bond to produce a beta-subunit with a hydroxyl group at its C-terminus and an alpha-subunit with a pyruvoyl group at its N-terminus.

The protein resides in the cytoplasm. The catalysed reaction is L-aspartate + H(+) = beta-alanine + CO2. It functions in the pathway cofactor biosynthesis; (R)-pantothenate biosynthesis; beta-alanine from L-aspartate: step 1/1. In terms of biological role, catalyzes the pyruvoyl-dependent decarboxylation of aspartate to produce beta-alanine. The sequence is that of Aspartate 1-decarboxylase from Shouchella clausii (strain KSM-K16) (Alkalihalobacillus clausii).